A 350-amino-acid chain; its full sequence is Peroxidase 24 (350 aa).

Residues 1–27 (MANKSLEIRFLFPLVLFLVVKLLCVDG) form the signal peptide. Cystine bridges form between cysteine 55–cysteine 135, cysteine 88–cysteine 93, cysteine 141–cysteine 346, and cysteine 221–cysteine 253. N-linked (GlcNAc...) asparagine glycosylation is present at asparagine 73. Histidine 86 acts as the Proton acceptor in catalysis. Residues aspartate 87, valine 90, glycine 92, aspartate 94, and serine 96 each contribute to the Ca(2+) site. Proline 184 lines the substrate pocket. The N-linked (GlcNAc...) asparagine glycan is linked to asparagine 189. Residue histidine 214 participates in heme b binding. Threonine 215 contacts Ca(2+). N-linked (GlcNAc...) asparagine glycosylation is present at asparagine 230. 2 residues coordinate Ca(2+): aspartate 269 and aspartate 277.

It belongs to the peroxidase family. Classical plant (class III) peroxidase subfamily. Requires heme b as cofactor. Ca(2+) serves as cofactor.

The protein localises to the secreted. The catalysed reaction is 2 a phenolic donor + H2O2 = 2 a phenolic radical donor + 2 H2O. Removal of H(2)O(2), oxidation of toxic reductants, biosynthesis and degradation of lignin, suberization, auxin catabolism, response to environmental stresses such as wounding, pathogen attack and oxidative stress. These functions might be dependent on each isozyme/isoform in each plant tissue. This chain is Peroxidase 24 (PER24), found in Arabidopsis thaliana (Mouse-ear cress).